Consider the following 430-residue polypeptide: MKLYNLKKKQDQVNFSKAVKLGLGKNQGLFFPKELPILTKEQLYKLLKMDFLTRSSKILSMFIGDEIHYSELTKRIKNAFSFTTPKIVSISKNIACFELFHGPTLAFKDFGARFMAQILSFLNHDKNDTITILTATSGDTGAAVAHAFFKMKNVRVIILYPKGKISELQEKLFCTLGENIITIAVNGSFDECQKLVKQAFNDDQLRIETGLNSANSINISRLLAQICYYFEAFALLTKKQQKNLVISVPCGNFGNLTAGLLAKALGLPIKSFIASTNSNDTVPRFLKTGFWKPNNTVSTISNAMDISQPNNWPRVEELFKRKFWSLKTLKYGSVSDILTKKSLKKLAFLGYVSEPHAAVAYYTLKNKLKQNEFGLFLGTAHPAKFKKTIEKILQITLFLPSKLRNQIKLPLLSHNIRPDFSKLKKFLLEK.

Lys-108 is modified (N6-(pyridoxal phosphate)lysine).

Belongs to the threonine synthase family. Requires pyridoxal 5'-phosphate as cofactor.

The enzyme catalyses O-phospho-L-homoserine + H2O = L-threonine + phosphate. The protein operates within amino-acid biosynthesis; L-threonine biosynthesis; L-threonine from L-aspartate: step 5/5. Its function is as follows. Catalyzes the gamma-elimination of phosphate from L-phosphohomoserine and the beta-addition of water to produce L-threonine. This chain is Threonine synthase (thrC), found in Buchnera aphidicola subsp. Baizongia pistaciae (strain Bp).